A 616-amino-acid polypeptide reads, in one-letter code: Chaperone protein DnaK (616 aa).

T175 carries the phosphothreonine; by autocatalysis modification. The segment at 579–605 (GGDPSQAGGFDPNAAGGAQQAPHDDNV) is disordered.

It belongs to the heat shock protein 70 family.

In terms of biological role, acts as a chaperone. The protein is Chaperone protein DnaK of Clostridium botulinum (strain Alaska E43 / Type E3).